The primary structure comprises 294 residues: UDP-N-acetylenolpyruvoylglucosamine reductase (294 aa).

The 164-residue stretch at 26 to 189 (VGGQADVLFK…IEAEFKGVSS (164 aa)) folds into the FAD-binding PCMH-type domain. The active site involves arginine 169. Residue cysteine 218 is the Proton donor of the active site. Residue glutamate 288 is part of the active site.

It belongs to the MurB family. FAD is required as a cofactor.

It is found in the cytoplasm. It carries out the reaction UDP-N-acetyl-alpha-D-muramate + NADP(+) = UDP-N-acetyl-3-O-(1-carboxyvinyl)-alpha-D-glucosamine + NADPH + H(+). The protein operates within cell wall biogenesis; peptidoglycan biosynthesis. Its function is as follows. Cell wall formation. The polypeptide is UDP-N-acetylenolpyruvoylglucosamine reductase (Wolbachia pipientis subsp. Culex pipiens (strain wPip)).